We begin with the raw amino-acid sequence, 425 residues long: MLNIKWIRENKELFDEKLSQRFIEPMSSKIAMLDREKRKITSLIQEFQHARKVKSKILGNMASKSGEEFEGLQRDVKHINEKLEALEHDLNNNNELNELLNMFPNIPDEEVPYGMDESMNKLVRTYGETNPNALNKQHFELGIKLNLMDFEQTAKISGTRFVTLKGDLAKLERALINFMIDVHTKEWDFFEISPPVLVRDNAMYNAGQLPKFAEESFATTNGYRLIPTAEVSLVNMVADTIIPREKLPIRYVAYTPCFRSEAGSSGRDTRGMIRLHQFGKVELVSITTPEESTNEHEYITNASETILQKLNLPYRVMLLCTGDMGFAAKKTYDIEVWLPGQKQYREIASCSNCGDFQARRMKARYKEFGSNETTLVHTLNASGLPIGRTMVAILENYQNEDGSITIPDVLINYMGGLQKIIAYSE.

228-230 (TAE) lines the L-serine pocket. Residue 259 to 261 (RSE) participates in ATP binding. Residue Glu282 participates in L-serine binding. 346-349 (EIAS) lines the ATP pocket. Ser382 lines the L-serine pocket.

The protein belongs to the class-II aminoacyl-tRNA synthetase family. Type-1 seryl-tRNA synthetase subfamily. In terms of assembly, homodimer. The tRNA molecule binds across the dimer.

It localises to the cytoplasm. The catalysed reaction is tRNA(Ser) + L-serine + ATP = L-seryl-tRNA(Ser) + AMP + diphosphate + H(+). It carries out the reaction tRNA(Sec) + L-serine + ATP = L-seryl-tRNA(Sec) + AMP + diphosphate + H(+). The protein operates within aminoacyl-tRNA biosynthesis; selenocysteinyl-tRNA(Sec) biosynthesis; L-seryl-tRNA(Sec) from L-serine and tRNA(Sec): step 1/1. In terms of biological role, catalyzes the attachment of serine to tRNA(Ser). Is also able to aminoacylate tRNA(Sec) with serine, to form the misacylated tRNA L-seryl-tRNA(Sec), which will be further converted into selenocysteinyl-tRNA(Sec). The chain is Serine--tRNA ligase from Rickettsia peacockii (strain Rustic).